A 139-amino-acid chain; its full sequence is Small ribosomal subunit protein uS12 (139 aa).

Positions 119–139 (GVDKRRQQRSAYGAKKPKPKS) are disordered.

This sequence belongs to the universal ribosomal protein uS12 family. In terms of assembly, part of the 30S ribosomal subunit. Contacts proteins S8 and S17. May interact with IF1 in the 30S initiation complex.

Functionally, with S4 and S5 plays an important role in translational accuracy. Interacts with and stabilizes bases of the 16S rRNA that are involved in tRNA selection in the A site and with the mRNA backbone. Located at the interface of the 30S and 50S subunits, it traverses the body of the 30S subunit contacting proteins on the other side and probably holding the rRNA structure together. The combined cluster of proteins S8, S12 and S17 appears to hold together the shoulder and platform of the 30S subunit. This chain is Small ribosomal subunit protein uS12, found in Mycoplasma genitalium (strain ATCC 33530 / DSM 19775 / NCTC 10195 / G37) (Mycoplasmoides genitalium).